The sequence spans 264 residues: ATP synthase subunit a (264 aa).

7 helical membrane passes run 30-50 (WNIDSLLFSVGLGMLFLWLFY), 90-110 (IAPLALTIFVWIFMMNFMDMI), 111-131 (PVDWLPSLALLAGVPYLKVVP), 134-154 (DVNITFSLALGVFVLIIYYSI), 177-197 (IPVNLLLETVTLVAKPISLAL), 208-228 (LIFILIALMYGSNVALSALGV), and 235-255 (LIFHILVITLQAFIFMMLTIV).

Belongs to the ATPase A chain family. F-type ATPases have 2 components, CF(1) - the catalytic core - and CF(0) - the membrane proton channel. CF(1) has five subunits: alpha(3), beta(3), gamma(1), delta(1), epsilon(1). CF(0) has three main subunits: a(1), b(2) and c(9-12). The alpha and beta chains form an alternating ring which encloses part of the gamma chain. CF(1) is attached to CF(0) by a central stalk formed by the gamma and epsilon chains, while a peripheral stalk is formed by the delta and b chains.

Its subcellular location is the cell inner membrane. Functionally, key component of the proton channel; it plays a direct role in the translocation of protons across the membrane. This is ATP synthase subunit a from Shewanella frigidimarina (strain NCIMB 400).